The following is a 564-amino-acid chain: MPKVEIYKSILLEKIGKNLTNYELESIIETAKAEICEIDIVNDKIKIEFNDTNRPDLWSSAGLARHIKTYLSGNVPSFDFFSMTDNLQKFYGEIFVSPEVFGIRPFIFGFLAKGMICDERMLESLIQLQEKLSHNYGQKRKRIAMGMYSSNLIHFPINYVTCSSDYKFVPLGMDIEMSIKEINERHPKGIEYSSIFENVDQYSLLLDYKNNVLSYPPIINSRDIGTLKVGDTNLFIEVTGTDLEATLLSLSIVACDLYDMGFKILPVKTVFPRETLFGKEIICPYYFQNSLKINVDSVNKLLGSNFTANDMCLDLKKLGISAYFEESDTFYIMPPVYRNDFLHEVDVIEEVMIGKGLDNFKSELPKDFTIGKLSPIEEFSRSVRNLMIGMGFQEMIYNYLGSKVDFIEKMNIKGSELLSVSNPMTESYEYIRGSIIPDLLKSESISSNFPYPHKIFEIGKVALKDLVSDEGTVTYDNLAFLMADKEFSFNEINSLVSSLFYYLNIGFKVKESSKNLYIDGRGADILVNDIVLGCFGEVSPYILNNFGIMVPCCVLEININGLLN.

One can recognise a B5 domain in the interval 286–362; it reads YFQNSLKINV…IGKGLDNFKS (77 aa). Positions 340, 346, 349, and 350 each coordinate Mg(2+).

It belongs to the phenylalanyl-tRNA synthetase beta subunit family. Type 2 subfamily. As to quaternary structure, tetramer of two alpha and two beta subunits. Mg(2+) is required as a cofactor.

The protein resides in the cytoplasm. The catalysed reaction is tRNA(Phe) + L-phenylalanine + ATP = L-phenylalanyl-tRNA(Phe) + AMP + diphosphate + H(+). This is Phenylalanine--tRNA ligase beta subunit from Borrelia recurrentis (strain A1).